A 346-amino-acid polypeptide reads, in one-letter code: 4-hydroxy-2-oxovalerate aldolase 2 (346 aa).

One can recognise a Pyruvate carboxyltransferase domain in the interval 8 to 258; the sequence is VTLVDTTLRD…HTGVELFPLI (251 aa). Substrate contacts are provided by residues 16–17, Ser170, and His197; that span reads RD. Position 17 (Asp17) interacts with Mn(2+). Mn(2+) contacts are provided by His197 and His199. Position 288 (Tyr288) interacts with substrate.

It belongs to the 4-hydroxy-2-oxovalerate aldolase family.

It carries out the reaction (S)-4-hydroxy-2-oxopentanoate = acetaldehyde + pyruvate. This is 4-hydroxy-2-oxovalerate aldolase 2 from Nocardia farcinica (strain IFM 10152).